The primary structure comprises 342 residues: tRNA N6-adenosine threonylcarbamoyltransferase (342 aa).

Fe cation-binding residues include H114 and H118. Substrate-binding positions include 136–140 (LVSGG), D169, G182, D186, and N275. Residue D301 participates in Fe cation binding.

Belongs to the KAE1 / TsaD family. It depends on Fe(2+) as a cofactor.

It is found in the cytoplasm. The catalysed reaction is L-threonylcarbamoyladenylate + adenosine(37) in tRNA = N(6)-L-threonylcarbamoyladenosine(37) in tRNA + AMP + H(+). In terms of biological role, required for the formation of a threonylcarbamoyl group on adenosine at position 37 (t(6)A37) in tRNAs that read codons beginning with adenine. Is involved in the transfer of the threonylcarbamoyl moiety of threonylcarbamoyl-AMP (TC-AMP) to the N6 group of A37, together with TsaE and TsaB. TsaD likely plays a direct catalytic role in this reaction. In Streptococcus pyogenes serotype M3 (strain ATCC BAA-595 / MGAS315), this protein is tRNA N6-adenosine threonylcarbamoyltransferase.